The following is a 352-amino-acid chain: Gap junction alpha-4 protein (352 aa).

Over 2-23 the chain is Cytoplasmic; the sequence is GDWEFLEKLLDQVQEHSTSIGK. A helical membrane pass occupies residues 24–46; sequence IWLMVLFIFRILILGLAGESVWG. The Extracellular segment spans residues 47-76; sequence DEQSDFTCNTEQPGCTNVCYDKAFPISHVR. Residues 77-99 form a helical membrane-spanning segment; that stretch reads YWVLQFLFVSTPTLFYLGHVIYL. The Cytoplasmic segment spans residues 100–153; that stretch reads SRKEEKLKQKESELRALDDKEQVEQAIAIIEKKKLKLYIQEDGTVKIKGALMYT. Residues 154–176 traverse the membrane as a helical segment; the sequence is YLTSVIFKSIFEAGFLLGQWYLY. Residues 177–208 lie on the Extracellular side of the membrane; that stretch reads GFVMTPIYVCERVPCPHKVDCFVSRPMEKTIF. The helical transmembrane segment at 209–231 threads the bilayer; sequence IIFMLVVSLISLFLNVLELIHLI. Topologically, residues 232–352 are cytoplasmic; it reads CKSMIHALKK…SSSASKKQYV (121 aa). Positions 332 to 352 are disordered; that stretch reads HSTVEKASTRASSSASKKQYV. Residues 340 to 352 show a composition bias toward low complexity; that stretch reads TRASSSASKKQYV.

It belongs to the connexin family. Alpha-type (group II) subfamily. A connexon is composed of a hexamer of connexins. As to expression, expressed in ovarian somatic cells, heart, leg muscle, liver and eye but not in brain.

It is found in the cell membrane. The protein localises to the cell junction. The protein resides in the gap junction. One gap junction consists of a cluster of closely packed pairs of transmembrane channels, the connexons, through which materials of low MW diffuse from one cell to a neighboring cell. The sequence is that of Gap junction alpha-4 protein (gja4) from Xenopus laevis (African clawed frog).